Consider the following 291-residue polypeptide: MSIKHPIIVVTGSSGAGTTSVKRTFEQIFYREKVKAAFVEGDSFHRYDRYEMRELMAAEAAKGNKHFSHFSPETNRLDDLAQLFKDYGATGSGRFRHYVHDAGEAKLYNTEPGRFTDWEDLEQGTDILFYEGLHGAVVTDELNLAQHADLKIGVVPVINLEWIQKIHRDKATRGYTTEDVTDTIMRRMPDYVRYICPQFTETDINFQRVPTVDTSNPFVARWIPTPDESMVVIRFRDPHGIDFPYLLSMIHNSFMSRANSIVIPGNKQDLAMQLLLTPLIMKLMDRKRRAG.

Gly-12–Ser-20 is an ATP binding site.

The protein belongs to the phosphoribulokinase family. In terms of assembly, homooctamer.

The enzyme catalyses D-ribulose 5-phosphate + ATP = D-ribulose 1,5-bisphosphate + ADP + H(+). The protein operates within carbohydrate biosynthesis; Calvin cycle. This Xanthobacter flavus protein is Phosphoribulokinase (cbbP).